Reading from the N-terminus, the 415-residue chain is Glycerate 2-kinase (415 aa).

Residue lysine 57 coordinates substrate.

The protein belongs to the glycerate kinase type-1 family. In terms of assembly, homodimer. The cofactor is Mg(2+). Requires Ni(2+) as cofactor. Mn(2+) is required as a cofactor. It depends on Co(2+) as a cofactor.

The catalysed reaction is (R)-glycerate + ATP = (2R)-2-phosphoglycerate + ADP + H(+). Functionally, catalyzes the ATP-dependent phosphorylation of D-glycerate to 2-phosphoglycerate. It can also partially utilize GTP, CTP or UTP as phosphate donor. The sequence is that of Glycerate 2-kinase (gck) from Picrophilus torridus (strain ATCC 700027 / DSM 9790 / JCM 10055 / NBRC 100828 / KAW 2/3).